A 435-amino-acid chain; its full sequence is GTPase Der (435 aa).

EngA-type G domains are found at residues 3–167 (NIVA…KDEG) and 176–351 (PRIA…ENRG). GTP-binding positions include 9-16 (GRPNVGKS), 56-60 (DTGGY), 119-122 (NKSD), 182-189 (GRPNAGKS), 229-233 (DTAGI), and 294-297 (NKWD). One can recognise a KH-like domain in the interval 352 to 435 (KRIPTSELND…VPISIVYRKK (84 aa)).

The protein belongs to the TRAFAC class TrmE-Era-EngA-EngB-Septin-like GTPase superfamily. EngA (Der) GTPase family. As to quaternary structure, associates with the 50S ribosomal subunit.

Functionally, GTPase that plays an essential role in the late steps of ribosome biogenesis. This Cytophaga hutchinsonii (strain ATCC 33406 / DSM 1761 / CIP 103989 / NBRC 15051 / NCIMB 9469 / D465) protein is GTPase Der.